The sequence spans 338 residues: Fructose-1,6-bisphosphatase class 1 (338 aa).

Residues Glu92, Asp115, Leu117, and Asp118 each contribute to the Mg(2+) site. Residues 118–121 (DGSS), Asn211, Tyr244, and Lys274 contribute to the substrate site. Glu280 contacts Mg(2+).

The protein belongs to the FBPase class 1 family. As to quaternary structure, homotetramer. The cofactor is Mg(2+).

Its subcellular location is the cytoplasm. It catalyses the reaction beta-D-fructose 1,6-bisphosphate + H2O = beta-D-fructose 6-phosphate + phosphate. It participates in carbohydrate biosynthesis; gluconeogenesis. This Photobacterium profundum (strain SS9) protein is Fructose-1,6-bisphosphatase class 1.